We begin with the raw amino-acid sequence, 260 residues long: tRNA (guanine-N(1)-)-methyltransferase (260 aa).

Residues glycine 117 and leucine 137 to leucine 142 contribute to the S-adenosyl-L-methionine site.

It belongs to the RNA methyltransferase TrmD family. In terms of assembly, homodimer.

The protein resides in the cytoplasm. The enzyme catalyses guanosine(37) in tRNA + S-adenosyl-L-methionine = N(1)-methylguanosine(37) in tRNA + S-adenosyl-L-homocysteine + H(+). Its function is as follows. Specifically methylates guanosine-37 in various tRNAs. The polypeptide is tRNA (guanine-N(1)-)-methyltransferase (Cupriavidus taiwanensis (strain DSM 17343 / BCRC 17206 / CCUG 44338 / CIP 107171 / LMG 19424 / R1) (Ralstonia taiwanensis (strain LMG 19424))).